The primary structure comprises 143 residues: Large ribosomal subunit protein uL16 (143 aa).

This sequence belongs to the universal ribosomal protein uL16 family. In terms of assembly, part of the 50S ribosomal subunit.

In terms of biological role, binds 23S rRNA and is also seen to make contacts with the A and possibly P site tRNAs. The protein is Large ribosomal subunit protein uL16 of Fusobacterium nucleatum subsp. nucleatum (strain ATCC 25586 / DSM 15643 / BCRC 10681 / CIP 101130 / JCM 8532 / KCTC 2640 / LMG 13131 / VPI 4355).